Reading from the N-terminus, the 642-residue chain is Fimbrin (642 aa).

2 EF-hand domains span residues 16–50 (EDLF…KDGD) and 51–86 (ATYD…LRES). Ca(2+)-binding residues include aspartate 29, aspartate 31, tryptophan 35, aspartate 66, serine 68, arginine 70, and aspartate 75. Actin-binding stretches follow at residues 125–394 (IVAG…GLEP) and 395–642 (IQEE…TLNK). Calponin-homology (CH) domains lie at 139–259 (EEER…RRGL), 287–390 (LPPE…NTHP), 411–521 (EREA…RRNI), and 534–642 (DMSD…TLNK).

Its function is as follows. Binds to actin, and functionally associates with actin structures involved in the development and maintenance of cell polarity. This chain is Fimbrin (SAC6), found in Saccharomyces cerevisiae (strain ATCC 204508 / S288c) (Baker's yeast).